The chain runs to 423 residues: Adenylosuccinate synthetase (423 aa).

GTP contacts are provided by residues 11-17 (GDEGKGK) and 39-41 (GHT). Asp12 acts as the Proton acceptor in catalysis. The Mg(2+) site is built by Asp12 and Gly39. Residues 12 to 15 (DEGK), 37 to 40 (NAGH), Thr129, Arg143, Asn219, Thr234, and Arg298 contribute to the IMP site. The active-site Proton donor is the His40. 294–300 (VTTGRRR) lines the substrate pocket. GTP contacts are provided by residues Arg300, 326-328 (KLD), and 411-413 (GTG).

The protein belongs to the adenylosuccinate synthetase family. As to quaternary structure, homodimer. Mg(2+) is required as a cofactor.

It localises to the cytoplasm. The catalysed reaction is IMP + L-aspartate + GTP = N(6)-(1,2-dicarboxyethyl)-AMP + GDP + phosphate + 2 H(+). It functions in the pathway purine metabolism; AMP biosynthesis via de novo pathway; AMP from IMP: step 1/2. In terms of biological role, plays an important role in the de novo pathway and in the salvage pathway of purine nucleotide biosynthesis. Catalyzes the first committed step in the biosynthesis of AMP from IMP. In Penicillium rubens (strain ATCC 28089 / DSM 1075 / NRRL 1951 / Wisconsin 54-1255) (Penicillium chrysogenum), this protein is Adenylosuccinate synthetase.